A 105-amino-acid chain; its full sequence is MCTFVFESLCAMISTLKVNKIERGYWFIQCLRYCFIYIIKKQHRQADLPRNFGMRSKALYIGRSVGKWIETFCLDSNYSTHVYSLWAKSFLIIQFENVDPFVDHF.

The protein resides in the cytoplasm. It localises to the nucleus. This is an uncharacterized protein from Schizosaccharomyces pombe (strain 972 / ATCC 24843) (Fission yeast).